Reading from the N-terminus, the 219-residue chain is Thiamine-phosphate synthase (219 aa).

4-amino-2-methyl-5-(diphosphooxymethyl)pyrimidine is bound by residues 44–48 and asparagine 79; that span reads QFREK. Mg(2+) contacts are provided by aspartate 80 and aspartate 99. Serine 117 is a 4-amino-2-methyl-5-(diphosphooxymethyl)pyrimidine binding site. 143–145 contacts 2-[(2R,5Z)-2-carboxy-4-methylthiazol-5(2H)-ylidene]ethyl phosphate; that stretch reads TST. 4-amino-2-methyl-5-(diphosphooxymethyl)pyrimidine is bound at residue lysine 146. 2-[(2R,5Z)-2-carboxy-4-methylthiazol-5(2H)-ylidene]ethyl phosphate-binding positions include glycine 175 and 195-196; that span reads IS.

The protein belongs to the thiamine-phosphate synthase family. Mg(2+) is required as a cofactor.

The enzyme catalyses 2-[(2R,5Z)-2-carboxy-4-methylthiazol-5(2H)-ylidene]ethyl phosphate + 4-amino-2-methyl-5-(diphosphooxymethyl)pyrimidine + 2 H(+) = thiamine phosphate + CO2 + diphosphate. It carries out the reaction 2-(2-carboxy-4-methylthiazol-5-yl)ethyl phosphate + 4-amino-2-methyl-5-(diphosphooxymethyl)pyrimidine + 2 H(+) = thiamine phosphate + CO2 + diphosphate. The catalysed reaction is 4-methyl-5-(2-phosphooxyethyl)-thiazole + 4-amino-2-methyl-5-(diphosphooxymethyl)pyrimidine + H(+) = thiamine phosphate + diphosphate. It participates in cofactor biosynthesis; thiamine diphosphate biosynthesis; thiamine phosphate from 4-amino-2-methyl-5-diphosphomethylpyrimidine and 4-methyl-5-(2-phosphoethyl)-thiazole: step 1/1. In terms of biological role, condenses 4-methyl-5-(beta-hydroxyethyl)thiazole monophosphate (THZ-P) and 2-methyl-4-amino-5-hydroxymethyl pyrimidine pyrophosphate (HMP-PP) to form thiamine monophosphate (TMP). The protein is Thiamine-phosphate synthase of Bacillus cereus (strain AH187).